The following is a 369-amino-acid chain: 4-hydroxy-3-methylbut-2-en-1-yl diphosphate synthase (flavodoxin) (369 aa).

4 residues coordinate [4Fe-4S] cluster: C270, C273, C305, and E312.

The protein belongs to the IspG family. [4Fe-4S] cluster serves as cofactor.

It catalyses the reaction (2E)-4-hydroxy-3-methylbut-2-enyl diphosphate + oxidized [flavodoxin] + H2O + 2 H(+) = 2-C-methyl-D-erythritol 2,4-cyclic diphosphate + reduced [flavodoxin]. The protein operates within isoprenoid biosynthesis; isopentenyl diphosphate biosynthesis via DXP pathway; isopentenyl diphosphate from 1-deoxy-D-xylulose 5-phosphate: step 5/6. Its function is as follows. Converts 2C-methyl-D-erythritol 2,4-cyclodiphosphate (ME-2,4cPP) into 1-hydroxy-2-methyl-2-(E)-butenyl 4-diphosphate. The protein is 4-hydroxy-3-methylbut-2-en-1-yl diphosphate synthase (flavodoxin) of Pseudomonas putida (strain ATCC 47054 / DSM 6125 / CFBP 8728 / NCIMB 11950 / KT2440).